We begin with the raw amino-acid sequence, 1034 residues long: Probable isoleucine--tRNA ligase, mitochondrial (1034 aa).

Residues 1–32 (MISLNNSFFNKRVIVNSFNNYKRSFGTKSQNE) constitute a mitochondrion transit peptide. A 'HIGH' region motif is present at residues 94 to 104 (PYANGDLHMGH). Residues 655–659 (KMSKS) carry the 'KMSKS' region motif. Lys658 contacts ATP.

Belongs to the class-I aminoacyl-tRNA synthetase family.

Its subcellular location is the mitochondrion matrix. It catalyses the reaction tRNA(Ile) + L-isoleucine + ATP = L-isoleucyl-tRNA(Ile) + AMP + diphosphate. This Dictyostelium discoideum (Social amoeba) protein is Probable isoleucine--tRNA ligase, mitochondrial (mileS).